Reading from the N-terminus, the 525-residue chain is GMP synthase [glutamine-hydrolyzing] (525 aa).

Residues 9–207 (RILILDFGSQ…VRDICQCEAL (199 aa)) form the Glutamine amidotransferase type-1 domain. Cys86 acts as the Nucleophile in catalysis. Active-site residues include His181 and Glu183. One can recognise a GMPS ATP-PPase domain in the interval 208–400 (WTPAKIIDDA…LGLPYDMLYR (193 aa)). 235–241 (SGGVDSS) contributes to the ATP binding site.

As to quaternary structure, homodimer.

The catalysed reaction is XMP + L-glutamine + ATP + H2O = GMP + L-glutamate + AMP + diphosphate + 2 H(+). It functions in the pathway purine metabolism; GMP biosynthesis; GMP from XMP (L-Gln route): step 1/1. Catalyzes the synthesis of GMP from XMP. The chain is GMP synthase [glutamine-hydrolyzing] from Shigella dysenteriae serotype 1 (strain Sd197).